A 366-amino-acid polypeptide reads, in one-letter code: Histone-lysine N-methyltransferase SETD7 (366 aa).

MORN repeat units lie at residues 36–58 (FEGN…DGST), 59–81 (LEGY…DGGV), and 106–128 (FKGQ…DGGS). Positions 214–336 (ERVYVAESLI…ADEELTVAYG (123 aa)) constitute an SET domain. S-adenosyl-L-methionine is bound by residues 226–228 (AGE), Asn-296, His-297, and Glu-356.

Belongs to the class V-like SAM-binding methyltransferase superfamily. Histone-lysine methyltransferase family. SET7 subfamily. As to quaternary structure, interacts with IPF1/PDX-1. Widely expressed. Expressed in pancreatic islets.

Its subcellular location is the nucleus. It is found in the chromosome. The enzyme catalyses L-lysyl(4)-[histone H3] + S-adenosyl-L-methionine = N(6)-methyl-L-lysyl(4)-[histone H3] + S-adenosyl-L-homocysteine + H(+). It carries out the reaction L-lysyl-[protein] + S-adenosyl-L-methionine = N(6)-methyl-L-lysyl-[protein] + S-adenosyl-L-homocysteine + H(+). Functionally, histone methyltransferase that specifically monomethylates 'Lys-4' of histone H3. H3 'Lys-4' methylation represents a specific tag for epigenetic transcriptional activation. Plays a central role in the transcriptional activation of genes such as collagenase or insulin. Recruited by IPF1/PDX-1 to the insulin promoter, leading to activate transcription. Also has methyltransferase activity toward non-histone proteins such as CGAS, p53/TP53, TAF10, and possibly TAF7 by recognizing and binding the [KR]-[STA]-K in substrate proteins. Monomethylates 'Lys-189' of TAF10, leading to increase the affinity of TAF10 for RNA polymerase II. Monomethylates 'Lys-372' of p53/TP53, stabilizing p53/TP53 and increasing p53/TP53-mediated transcriptional activation. Monomethylates 'Lys-491' of CGAS, promoting interaction between SGF29 and CGAS. This chain is Histone-lysine N-methyltransferase SETD7 (SETD7), found in Homo sapiens (Human).